A 497-amino-acid chain; its full sequence is Glycerol kinase (497 aa).

T12 lines the ADP pocket. ATP contacts are provided by T12, T13, and S14. T12 lines the sn-glycerol 3-phosphate pocket. ADP is bound at residue R16. 4 residues coordinate sn-glycerol 3-phosphate: R82, E83, Y134, and D243. Glycerol contacts are provided by R82, E83, Y134, D243, and Q244. T265 and G308 together coordinate ADP. Positions 265, 308, 312, and 409 each coordinate ATP. ADP is bound by residues G409 and N413.

Belongs to the FGGY kinase family.

The catalysed reaction is glycerol + ATP = sn-glycerol 3-phosphate + ADP + H(+). It participates in polyol metabolism; glycerol degradation via glycerol kinase pathway; sn-glycerol 3-phosphate from glycerol: step 1/1. Inhibited by fructose 1,6-bisphosphate (FBP). Its function is as follows. Key enzyme in the regulation of glycerol uptake and metabolism. Catalyzes the phosphorylation of glycerol to yield sn-glycerol 3-phosphate. The chain is Glycerol kinase from Nitratidesulfovibrio vulgaris (strain DSM 19637 / Miyazaki F) (Desulfovibrio vulgaris).